We begin with the raw amino-acid sequence, 441 residues long: uncharacterized protein (441 aa).

The segment covering 121 to 143 (TLSPSIVSEQQQQQQQQQQQQQQ) has biased composition (low complexity). Disordered regions lie at residues 121-146 (TLSP…QAIS) and 371-392 (SDAD…TAPN). Residues 382–391 (PTSAPSTTAP) show a composition bias toward polar residues.

This is an uncharacterized protein from Dictyostelium discoideum (Social amoeba).